The sequence spans 157 residues: Endoribonuclease YbeY (157 aa).

The Zn(2+) site is built by H114, H118, and H124.

The protein belongs to the endoribonuclease YbeY family. It depends on Zn(2+) as a cofactor.

It localises to the cytoplasm. Its function is as follows. Single strand-specific metallo-endoribonuclease involved in late-stage 70S ribosome quality control and in maturation of the 3' terminus of the 16S rRNA. The polypeptide is Endoribonuclease YbeY (Salmonella typhimurium (strain LT2 / SGSC1412 / ATCC 700720)).